Reading from the N-terminus, the 262-residue chain is Acyl-[acyl-carrier-protein]--UDP-N-acetylglucosamine O-acyltransferase (262 aa).

This sequence belongs to the transferase hexapeptide repeat family. LpxA subfamily. In terms of assembly, homotrimer.

It is found in the cytoplasm. The catalysed reaction is a (3R)-hydroxyacyl-[ACP] + UDP-N-acetyl-alpha-D-glucosamine = a UDP-3-O-[(3R)-3-hydroxyacyl]-N-acetyl-alpha-D-glucosamine + holo-[ACP]. It participates in glycolipid biosynthesis; lipid IV(A) biosynthesis; lipid IV(A) from (3R)-3-hydroxytetradecanoyl-[acyl-carrier-protein] and UDP-N-acetyl-alpha-D-glucosamine: step 1/6. Involved in the biosynthesis of lipid A, a phosphorylated glycolipid that anchors the lipopolysaccharide to the outer membrane of the cell. The protein is Acyl-[acyl-carrier-protein]--UDP-N-acetylglucosamine O-acyltransferase of Pectobacterium atrosepticum (strain SCRI 1043 / ATCC BAA-672) (Erwinia carotovora subsp. atroseptica).